The primary structure comprises 327 residues: Phenylalanine--tRNA ligase alpha subunit (327 aa).

Glu-252 contacts Mg(2+).

Belongs to the class-II aminoacyl-tRNA synthetase family. Phe-tRNA synthetase alpha subunit type 1 subfamily. Tetramer of two alpha and two beta subunits. Mg(2+) is required as a cofactor.

The protein resides in the cytoplasm. The catalysed reaction is tRNA(Phe) + L-phenylalanine + ATP = L-phenylalanyl-tRNA(Phe) + AMP + diphosphate + H(+). The chain is Phenylalanine--tRNA ligase alpha subunit from Edwardsiella ictaluri (strain 93-146).